The chain runs to 788 residues: Cyclin-F (788 aa).

The Nuclear localization signal 1 motif lies at 20 to 28; it reads KRRIRRRPR. Positions 29–76 constitute an F-box domain; that stretch reads NLTILNLPEDALFHILKWLSVGDILAVRAVHSHLKYLVDNHASVWACA. Residues 291 to 405 form the Cyclin N-terminal domain; the sequence is HAVNKQRVFS…EVVSALDGKI (115 aa). Short sequence motifs (d box) lie at residues 310 to 313, 343 to 346, 349 to 352, and 351 to 354; these read RYIL, RRRL, RYRL, and RLQL. Disordered regions lie at residues 566–585 and 700–788; these read SARRTKRKRENSLQEDRGSF and TSGY…FLKL. The short motif at 568 to 574 is the Nuclear localization signal 2 element; the sequence is RRTKRKR. A PEST region spans residues 582 to 766; the sequence is RGSFVTTPTA…ESCAPQQQVK (185 aa). Composition is skewed to polar residues over residues 700-716 and 723-738; these read TSGYSSVNSASPTDSGR and RSTSELPTGSSLNTQP. Residues 767–770 carry the D box 5 motif; that stretch reads RKNL.

This sequence belongs to the cyclin family. Cyclin AB subfamily. In terms of assembly, component of the SCF(CCNF) complex consisting of CUL1, RBX1, SKP1 and CCNF. Interacts with SKP1. Interacts with CUL1. Interacts with CCNB1; interaction is required for nuclear localization of CCNB1. Interacts with CCP110; this interaction leads to CCP110 ubiquitination and degradation via the proteasome pathway. Interacts (via the Cyclin N-terminal domain) with MYBL2/BMYB. Interacts with FZR1/CDH1 (via N-terminus). Interacts with RRM2 (via Cy motif and when phosphorylated at 'Thr-33'); the interaction occurs exclusively in G2 and early M. Interacts with CDC6 (via Cy motif); the interaction takes place during G2 and M phase. In terms of processing, degraded when the spindle assembly checkpoint is activated during the G2-M transition. Degradation is not dependent on the proteasome or ubiquitin and depends on the C-terminal PEST sequence. Post-translationally, phosphorylated just before cells enter into mitosis. Ubiquitinated by the anaphase-promoting complex (APC/C); leading to its degradation by the proteasome.

The protein resides in the nucleus. The protein localises to the cytoplasm. Its subcellular location is the perinuclear region. It is found in the cytoskeleton. It localises to the microtubule organizing center. The protein resides in the centrosome. The protein localises to the centriole. Substrate recognition component of a SCF (SKP1-CUL1-F-box protein) E3 ubiquitin-protein ligase complex which mediates the ubiquitination and subsequent proteasomal degradation of target proteins. The SCF(CCNF) E3 ubiquitin-protein ligase complex is an integral component of the ubiquitin proteasome system (UPS) and links proteasome degradation to the cell cycle. Mediates the substrate recognition and the proteasomal degradation of various target proteins involved in the regulation of cell cycle progression and in the maintenance of genome stability. Mediates the ubiquitination and subsequent proteasomal degradation of CP110 during G2 phase, thereby acting as an inhibitor of centrosome reduplication. In G2, mediates the ubiquitination and proteasomal degradation of CDC6, thereby suppressing DNA re-replication and preventing genome instability. Involved in the ubiquitination and degradation of the substrate adapter CDH1 of the anaphase-promoting complex (APC/C), thereby acting as an antagonist of APC/C in regulating G1 progression and S phase entry. May play a role in the G2 cell cycle checkpoint control after DNA damage, possibly by promoting the ubiquitination of MYBL2/BMYB. The protein is Cyclin-F (CCNF) of Bos taurus (Bovine).